The sequence spans 94 residues: Defensin-like protein 21 (94 aa).

The signal sequence occupies residues 1 to 26 (MVRTNVVSFVLFAAIVLCIGSIQIDG). Cystine bridges form between C41/C92, C51/C79, C65/C88, and C69/C90.

The protein belongs to the DEFL family.

It is found in the secreted. This chain is Defensin-like protein 21, found in Arabidopsis thaliana (Mouse-ear cress).